Here is a 173-residue protein sequence, read N- to C-terminus: Dual-action ribosomal maturation protein DarP (173 aa).

The protein belongs to the DarP family.

The protein localises to the cytoplasm. Its function is as follows. Member of a network of 50S ribosomal subunit biogenesis factors which assembles along the 30S-50S interface, preventing incorrect 23S rRNA structures from forming. Promotes peptidyl transferase center (PTC) maturation. In Pseudomonas putida (strain ATCC 700007 / DSM 6899 / JCM 31910 / BCRC 17059 / LMG 24140 / F1), this protein is Dual-action ribosomal maturation protein DarP.